We begin with the raw amino-acid sequence, 187 residues long: Elongation factor P (187 aa).

Belongs to the elongation factor P family.

Its subcellular location is the cytoplasm. Its pathway is protein biosynthesis; polypeptide chain elongation. Functionally, involved in peptide bond synthesis. Stimulates efficient translation and peptide-bond synthesis on native or reconstituted 70S ribosomes in vitro. Probably functions indirectly by altering the affinity of the ribosome for aminoacyl-tRNA, thus increasing their reactivity as acceptors for peptidyl transferase. In Roseiflexus castenholzii (strain DSM 13941 / HLO8), this protein is Elongation factor P.